A 95-amino-acid polypeptide reads, in one-letter code: Aspartyl/glutamyl-tRNA(Asn/Gln) amidotransferase subunit C (95 aa).

It belongs to the GatC family. As to quaternary structure, heterotrimer of A, B and C subunits.

It catalyses the reaction L-glutamyl-tRNA(Gln) + L-glutamine + ATP + H2O = L-glutaminyl-tRNA(Gln) + L-glutamate + ADP + phosphate + H(+). The catalysed reaction is L-aspartyl-tRNA(Asn) + L-glutamine + ATP + H2O = L-asparaginyl-tRNA(Asn) + L-glutamate + ADP + phosphate + 2 H(+). Allows the formation of correctly charged Asn-tRNA(Asn) or Gln-tRNA(Gln) through the transamidation of misacylated Asp-tRNA(Asn) or Glu-tRNA(Gln) in organisms which lack either or both of asparaginyl-tRNA or glutaminyl-tRNA synthetases. The reaction takes place in the presence of glutamine and ATP through an activated phospho-Asp-tRNA(Asn) or phospho-Glu-tRNA(Gln). The polypeptide is Aspartyl/glutamyl-tRNA(Asn/Gln) amidotransferase subunit C (Vesicomyosocius okutanii subsp. Calyptogena okutanii (strain HA)).